Consider the following 248-residue polypeptide: Probable transcriptional regulatory protein RL3983 (248 aa).

It belongs to the TACO1 family.

It localises to the cytoplasm. This chain is Probable transcriptional regulatory protein RL3983, found in Rhizobium johnstonii (strain DSM 114642 / LMG 32736 / 3841) (Rhizobium leguminosarum bv. viciae).